Reading from the N-terminus, the 922-residue chain is GPI inositol-deacylase (922 aa).

At 1 to 11 (MFLHSVNLWNL) the chain is on the cytoplasmic side. The chain crosses the membrane as a helical span at residues 12–32 (AFYVFMVFLATLGLWDVFFGF). Residues 33 to 597 (EENKCSMSYM…GQVVRFHGGA (565 aa)) lie on the Lumenal side of the membrane. Serine 174 is an active-site residue. 3 N-linked (GlcNAc...) asparagine glycosylation sites follow: asparagine 363, asparagine 402, and asparagine 558. The chain crosses the membrane as a helical span at residues 598–618 (LPAYVVSSILLAYGGQLYSLL). Residues 619 to 641 (STGFCLEYGTMLDKEAKPYKVDP) are Cytoplasmic-facing. The helical transmembrane segment at 642-662 (FVIMIKFLLGYKWFKELWDAV) threads the bilayer. Residues 663–668 (LLPELD) lie on the Lumenal side of the membrane. A helical transmembrane segment spans residues 669–689 (AIVLTSQSMCFPLVSLILFLF). Over 690 to 694 (GTCTA) the chain is Cytoplasmic. A helical membrane pass occupies residues 695-715 (YWSGLLSSASVQLLSSLWLAL). Topologically, residues 716–733 (KRPAELPKDVKVMSPDLP) are lumenal. A helical membrane pass occupies residues 734–754 (VLTVVFLIISWTTCGALAILL). Over 755–816 (SYLYYVFKVV…NDAEDSLRMH (62 aa)) the chain is Cytoplasmic. The segment at 776–801 (NQPVNPKHSRRSEKKSNHHKDSAIQN) is disordered. Basic residues predominate over residues 782–793 (KHSRRSEKKSNH). Residues 817–837 (STVINLLTWVVLLSMPSLIYW) form a helical membrane-spanning segment. The Lumenal portion of the chain corresponds to 838–853 (SKNLRYYFKLNPDPCK). Residues 854-874 (PLAFLLIPAIAVLGNTHTVSI) form a helical membrane-spanning segment. The Cytoplasmic segment spans residues 875 to 894 (KSSKLLKTASQFPLPLAVGV). Residues 895 to 915 (IAFGSSHLYRVPCFVIIPLVF) traverse the membrane as a helical segment. Topologically, residues 916–922 (HSLCNFM) are lumenal.

It belongs to the GPI inositol-deacylase family.

It is found in the endoplasmic reticulum membrane. Its function is as follows. GPI inositol-deacylase that catalyzes the remove of the acyl chain linked to the 2-OH position of inositol ring from the GPI-anchored protein (GPI-AP) in the endoplasmic reticulum. Initiates the post-attachment remodeling phase of GPI-AP biogenesis and participates in endoplasmic reticulum (ER)-to-Golgi transport of GPI-anchored protein. The protein is GPI inositol-deacylase of Rattus norvegicus (Rat).